Reading from the N-terminus, the 210-residue chain is ATP-dependent dethiobiotin synthetase BioD (210 aa).

Residue 13–18 (DVGKTV) participates in ATP binding. Threonine 17 lines the Mg(2+) pocket. Lysine 33 is an active-site residue. Mg(2+) is bound by residues arginine 47 and glutamate 101. ATP contacts are provided by residues 101–104 (EGAG) and 185–187 (PPL).

Belongs to the dethiobiotin synthetase family. In terms of assembly, homodimer. Mg(2+) serves as cofactor.

The protein resides in the cytoplasm. The enzyme catalyses (7R,8S)-7,8-diammoniononanoate + CO2 + ATP = (4R,5S)-dethiobiotin + ADP + phosphate + 3 H(+). Its pathway is cofactor biosynthesis; biotin biosynthesis; biotin from 7,8-diaminononanoate: step 1/2. Its function is as follows. Catalyzes a mechanistically unusual reaction, the ATP-dependent insertion of CO2 between the N7 and N8 nitrogen atoms of 7,8-diaminopelargonic acid (DAPA, also called 7,8-diammoniononanoate) to form a ureido ring. The polypeptide is ATP-dependent dethiobiotin synthetase BioD (Afipia carboxidovorans (strain ATCC 49405 / DSM 1227 / KCTC 32145 / OM5) (Oligotropha carboxidovorans)).